Here is a 205-residue protein sequence, read N- to C-terminus: Holliday junction branch migration complex subunit RuvA (205 aa).

The domain I stretch occupies residues 1–64 (MIGKLKGTID…EDQLKLFGFL (64 aa)). The segment at 65 to 143 (SALEREWFRL…AFVGEMAPSI (79 aa)) is domain II. A flexible linker region spans residues 144–153 (GLKQELGEGV). Positions 153 to 205 (VAAAPVSDAVSALTNLGYSRDQAANAVAAALKNGGEGADSARLIRLGLKELSR) are domain III.

It belongs to the RuvA family. Homotetramer. Forms an RuvA(8)-RuvB(12)-Holliday junction (HJ) complex. HJ DNA is sandwiched between 2 RuvA tetramers; dsDNA enters through RuvA and exits via RuvB. An RuvB hexamer assembles on each DNA strand where it exits the tetramer. Each RuvB hexamer is contacted by two RuvA subunits (via domain III) on 2 adjacent RuvB subunits; this complex drives branch migration. In the full resolvosome a probable DNA-RuvA(4)-RuvB(12)-RuvC(2) complex forms which resolves the HJ.

It localises to the cytoplasm. In terms of biological role, the RuvA-RuvB-RuvC complex processes Holliday junction (HJ) DNA during genetic recombination and DNA repair, while the RuvA-RuvB complex plays an important role in the rescue of blocked DNA replication forks via replication fork reversal (RFR). RuvA specifically binds to HJ cruciform DNA, conferring on it an open structure. The RuvB hexamer acts as an ATP-dependent pump, pulling dsDNA into and through the RuvAB complex. HJ branch migration allows RuvC to scan DNA until it finds its consensus sequence, where it cleaves and resolves the cruciform DNA. The sequence is that of Holliday junction branch migration complex subunit RuvA from Sinorhizobium medicae (strain WSM419) (Ensifer medicae).